A 387-amino-acid polypeptide reads, in one-letter code: Phosphoglycerate kinase (387 aa).

Substrate-binding positions include 21-23 (DLN), arginine 36, 59-62 (HLGR), arginine 113, and arginine 146. Residues lysine 197, glutamate 314, and 340-343 (GGDT) contribute to the ATP site.

The protein belongs to the phosphoglycerate kinase family. Monomer.

Its subcellular location is the cytoplasm. The catalysed reaction is (2R)-3-phosphoglycerate + ATP = (2R)-3-phospho-glyceroyl phosphate + ADP. It functions in the pathway carbohydrate degradation; glycolysis; pyruvate from D-glyceraldehyde 3-phosphate: step 2/5. This Photorhabdus laumondii subsp. laumondii (strain DSM 15139 / CIP 105565 / TT01) (Photorhabdus luminescens subsp. laumondii) protein is Phosphoglycerate kinase.